The following is a 272-amino-acid chain: Imidazole glycerol phosphate synthase subunit HisF (272 aa).

Catalysis depends on residues Asp-11 and Asp-130.

Belongs to the HisA/HisF family. In terms of assembly, heterodimer of HisH and HisF.

Its subcellular location is the cytoplasm. It catalyses the reaction 5-[(5-phospho-1-deoxy-D-ribulos-1-ylimino)methylamino]-1-(5-phospho-beta-D-ribosyl)imidazole-4-carboxamide + L-glutamine = D-erythro-1-(imidazol-4-yl)glycerol 3-phosphate + 5-amino-1-(5-phospho-beta-D-ribosyl)imidazole-4-carboxamide + L-glutamate + H(+). It functions in the pathway amino-acid biosynthesis; L-histidine biosynthesis; L-histidine from 5-phospho-alpha-D-ribose 1-diphosphate: step 5/9. In terms of biological role, IGPS catalyzes the conversion of PRFAR and glutamine to IGP, AICAR and glutamate. The HisF subunit catalyzes the cyclization activity that produces IGP and AICAR from PRFAR using the ammonia provided by the HisH subunit. This Methanococcus vannielii (strain ATCC 35089 / DSM 1224 / JCM 13029 / OCM 148 / SB) protein is Imidazole glycerol phosphate synthase subunit HisF.